We begin with the raw amino-acid sequence, 158 residues long: Male-specific protein scotti (158 aa).

Residues 24–43 (NVPDGNGDGDGDGDGDGNDA) form a disordered region. The segment covering 30 to 42 (GDGDGDGDGDGND) has biased composition (acidic residues).

The protein belongs to the male-specific scotti family.

In terms of biological role, post-meiotically transcribed gene that has a role in late spermiogenesis; required for actin cone progression during spermatid individualization. This chain is Male-specific protein scotti, found in Drosophila virilis (Fruit fly).